The chain runs to 221 residues: Late embryogenesis abundant protein, group 3 (221 aa).

Positions 1 to 221 are disordered; it reads MASHQDKASY…KDSSTITRDH (221 aa). Basic and acidic residues predominate over residues 33–42; sequence TAQHAKDRAA. A compositionally biased stretch (low complexity) spans 43–52; the sequence is DAAGHAAGKG. 2 stretches are compositionally biased toward basic and acidic residues: residues 53–63 and 72–147; these read QDAKEATKQKA and KKTD…KQKA. A compositionally biased stretch (polar residues) spans 212–221; the sequence is KDSSTITRDH.

It belongs to the LEA type 4 family.

The protein is Late embryogenesis abundant protein, group 3 (MGL3) of Zea mays (Maize).